Here is an 873-residue protein sequence, read N- to C-terminus: Leucine--tRNA ligase (873 aa).

Residues 47–57 carry the 'HIGH' region motif; sequence PYPSGKLHMGH. Positions 636–640 match the 'KMSKS' region motif; it reads KMSKS. Lys-639 lines the ATP pocket.

This sequence belongs to the class-I aminoacyl-tRNA synthetase family.

Its subcellular location is the cytoplasm. The enzyme catalyses tRNA(Leu) + L-leucine + ATP = L-leucyl-tRNA(Leu) + AMP + diphosphate. This Acinetobacter baylyi (strain ATCC 33305 / BD413 / ADP1) protein is Leucine--tRNA ligase.